The following is a 120-amino-acid chain: MHEASIALALIDVAGDVLREHGAARASALTVRVGQWSSVVPEALAAAFPACAEGTPLAGARLSIERVPGVGECPQHGPVELEVWRGLRCPLCGAPTPRLLQGDELELDQLELDQLELENL.

Histidine 2 is a Ni(2+) binding site. Residues cysteine 73, histidine 76, cysteine 89, and cysteine 92 each coordinate Zn(2+).

The protein belongs to the HypA/HybF family.

Its function is as follows. Involved in the maturation of [NiFe] hydrogenases. Required for nickel insertion into the metal center of the hydrogenase. The sequence is that of Hydrogenase maturation factor HypA from Deinococcus radiodurans (strain ATCC 13939 / DSM 20539 / JCM 16871 / CCUG 27074 / LMG 4051 / NBRC 15346 / NCIMB 9279 / VKM B-1422 / R1).